The sequence spans 477 residues: Bifunctional protein HldE (477 aa).

The tract at residues 1 to 318 (MKVTLPEFER…ENAVRGRAET (318 aa)) is ribokinase. Residue 195–198 (NLSE) coordinates ATP. The active site involves Asp264. Residues 344–477 (MTNGVFDILH…IKKIQKDSDK (134 aa)) form a cytidylyltransferase region.

It in the N-terminal section; belongs to the carbohydrate kinase PfkB family. In the C-terminal section; belongs to the cytidylyltransferase family. As to quaternary structure, homodimer.

The enzyme catalyses D-glycero-beta-D-manno-heptose 7-phosphate + ATP = D-glycero-beta-D-manno-heptose 1,7-bisphosphate + ADP + H(+). The catalysed reaction is D-glycero-beta-D-manno-heptose 1-phosphate + ATP + H(+) = ADP-D-glycero-beta-D-manno-heptose + diphosphate. It functions in the pathway nucleotide-sugar biosynthesis; ADP-L-glycero-beta-D-manno-heptose biosynthesis; ADP-L-glycero-beta-D-manno-heptose from D-glycero-beta-D-manno-heptose 7-phosphate: step 1/4. It participates in nucleotide-sugar biosynthesis; ADP-L-glycero-beta-D-manno-heptose biosynthesis; ADP-L-glycero-beta-D-manno-heptose from D-glycero-beta-D-manno-heptose 7-phosphate: step 3/4. In terms of biological role, catalyzes the phosphorylation of D-glycero-D-manno-heptose 7-phosphate at the C-1 position to selectively form D-glycero-beta-D-manno-heptose-1,7-bisphosphate. Catalyzes the ADP transfer from ATP to D-glycero-beta-D-manno-heptose 1-phosphate, yielding ADP-D-glycero-beta-D-manno-heptose. The polypeptide is Bifunctional protein HldE (Klebsiella pneumoniae subsp. pneumoniae (strain ATCC 700721 / MGH 78578)).